The sequence spans 502 residues: MSNEEKNLMNEEQEFNQLIQERRQKFFDLQAEGKDPFEVTKVERTHTSEEIKSNFEELEDKEVTVAGRLMSKRVHGKAGFSDIHDRYGKIQLYIKINDVGEERLKEYKSFDIGDFVTITGTVFKTRTGEVSIHITDFKLIAKSLKPLPEKWHGLKDPDLRYRQRYVDLIVNEDVRDTFMKRTKIIKYMREFLDAKDYIEVETPVLSPIAGGAAARPFTTHHNALDIDMYLRIATELYLKRLIVGGFEKVYEIGKNFRNEGIDIRHNPEFTMIELYEAYADYNDMMEITENMVAYIAEKVCGNTKVKYEETEIEFRPPWKRITMVDSVKEYSGVDFNEIKTDEEARELVKGKDFELKKKLEDCTKADILNLFFEEYVEKNLIQPTFVCDYPVEISPLSKKKNDNPEYTERFEGFVYGRELCNAYTELNDPIVQKERFIQQLKERELGDDEAFMMDEDFINALEIGMPPTGGLGIGVDRLVMFLTDSHSIRDVILFPTMKPTHN.

Residues Glu-411 and Glu-418 each contribute to the Mg(2+) site.

This sequence belongs to the class-II aminoacyl-tRNA synthetase family. As to quaternary structure, homodimer. Mg(2+) is required as a cofactor.

Its subcellular location is the cytoplasm. It catalyses the reaction tRNA(Lys) + L-lysine + ATP = L-lysyl-tRNA(Lys) + AMP + diphosphate. In Clostridium tetani (strain Massachusetts / E88), this protein is Lysine--tRNA ligase.